The sequence spans 98 residues: PsbF-like protein (98 aa).

The next 2 helical transmembrane spans lie at 5–25 and 73–93; these read VLLV…WLGK and TAAV…ILAM.

This sequence belongs to the PsbE/PsbF family.

It is found in the membrane. In terms of biological role, unknown. Resembles PsbF, one of the subunits of the photosystem II reaction center. However, it encodes asparagine rather than histidine at the site PsbF uses to bind heme. This chain is PsbF-like protein, found in Prochlorococcus marinus (strain MIT 9312).